The chain runs to 587 residues: Aspartate--tRNA ligase (587 aa).

Residue glutamate 173 participates in L-aspartate binding. An aspartate region spans residues 197–200; the sequence is QTLK. An L-aspartate-binding site is contributed by arginine 219. Residues 219–221 and glutamine 228 each bind ATP; that span reads RDE. Residue histidine 446 participates in L-aspartate binding. ATP is bound at residue glutamate 480. Arginine 487 lines the L-aspartate pocket. 532 to 535 serves as a coordination point for ATP; the sequence is GLDR.

The protein belongs to the class-II aminoacyl-tRNA synthetase family. Type 1 subfamily. In terms of assembly, homodimer.

The protein resides in the cytoplasm. The catalysed reaction is tRNA(Asp) + L-aspartate + ATP = L-aspartyl-tRNA(Asp) + AMP + diphosphate. In terms of biological role, catalyzes the attachment of L-aspartate to tRNA(Asp) in a two-step reaction: L-aspartate is first activated by ATP to form Asp-AMP and then transferred to the acceptor end of tRNA(Asp). In Phocaeicola vulgatus (strain ATCC 8482 / DSM 1447 / JCM 5826 / CCUG 4940 / NBRC 14291 / NCTC 11154) (Bacteroides vulgatus), this protein is Aspartate--tRNA ligase.